Here is a 263-residue protein sequence, read N- to C-terminus: Hydroxyethylthiazole kinase 2 (263 aa).

A substrate-binding site is contributed by Met-42. ATP contacts are provided by Lys-118 and Thr-164. Gly-191 provides a ligand contact to substrate.

The protein belongs to the Thz kinase family. The cofactor is Mg(2+).

It catalyses the reaction 5-(2-hydroxyethyl)-4-methylthiazole + ATP = 4-methyl-5-(2-phosphooxyethyl)-thiazole + ADP + H(+). Its pathway is cofactor biosynthesis; thiamine diphosphate biosynthesis; 4-methyl-5-(2-phosphoethyl)-thiazole from 5-(2-hydroxyethyl)-4-methylthiazole: step 1/1. Functionally, catalyzes the phosphorylation of the hydroxyl group of 4-methyl-5-beta-hydroxyethylthiazole (THZ). The chain is Hydroxyethylthiazole kinase 2 from Clostridium botulinum (strain Loch Maree / Type A3).